Here is a 937-residue protein sequence, read N- to C-terminus: Protocadherin alpha-7 (937 aa).

An N-terminal signal peptide occupies residues 1 to 29 (MVCPNGYDPGGRHLLLFIIILAAWEAGRG). 6 Cadherin domains span residues 30 to 133 (QLHY…PPVF), 134 to 242 (PATQ…APVF), 243 to 350 (DRTL…APQL), 351 to 455 (TLTS…APAF), 456 to 565 (AQPE…APAL), and 581 to 678 (VPRS…APKA). Residues 30–697 (QLHYSVPEEA…GPETELVDVN (668 aa)) are Extracellular-facing. An intrachain disulfide couples Cys-96 to Cys-102. Asn-254 and Asn-265 each carry an N-linked (GlcNAc...) asparagine glycan. Residue Asn-548 is glycosylated (N-linked (GlcNAc...) asparagine). Residues 698-718 (VYLIIAICAVSSLLVLTLLLY) traverse the membrane as a helical segment. Over 719–937 (TALRCSAPSS…GNSTTDNSDQ (219 aa)) the chain is Cytoplasmic. 2 disordered regions span residues 756–795 (QRVC…DWRY) and 817–843 (AGPG…EVSP). PXXP repeat units lie at residues 774 to 777 (PSLP), 786 to 789 (PRQP), 819 to 822 (PGGP), 860 to 863 (PGNP), and 878 to 881 (PGSP). The tract at residues 774-881 (PSLPQGPSST…PDKFIIPGSP (108 aa)) is 5 X 4 AA repeats of P-X-X-P. The span at 775–787 (SLPQGPSSTDNPR) shows a compositional bias: polar residues. The tract at residues 888-937 (QEPANSQIDKSDFITFGKKEETKKKKKKKKGNKTQEKKEKGNSTTDNSDQ) is disordered. The segment covering 896–910 (DKSDFITFGKKEETK) has biased composition (basic and acidic residues).

Forms homodimers in trans (molecules expressed by two different cells). Forms promiscuous heterodimers in cis (at the plasma membrane of the same cell) with other protocadherins.

Its subcellular location is the cell membrane. In terms of biological role, calcium-dependent cell-adhesion protein involved in cells self-recognition and non-self discrimination. Thereby, it is involved in the establishment and maintenance of specific neuronal connections in the brain. The sequence is that of Protocadherin alpha-7 from Pan troglodytes (Chimpanzee).